Reading from the N-terminus, the 185-residue chain is MSSFIDSIKSTSLSRALTIALGSNNFKSASTINDCKMGLYSSRLLAIPDNFSLVSSNIPSSDCSRAERTFNLILFAIVDLVICCESMAFFNLLLKLPSMLLVSFLTMLVFSISYSWSAFNWISFAFSSASFLMKACILFNSSFTWFGVKAVIAEDMLYRMVRGLFCASFVKQLQTTFLATAIVLC.

The Cytoplasmic portion of the chain corresponds to 1-69 (MSSFIDSIKS…SSDCSRAERT (69 aa)). The helical transmembrane segment at 70–90 (FNLILFAIVDLVICCESMAFF) threads the bilayer. A topological domain (extracellular) is located at residue asparagine 91. A helical transmembrane segment spans residues 92–112 (LLLKLPSMLLVSFLTMLVFSI). The Cytoplasmic portion of the chain corresponds to 113 to 118 (SYSWSA). Residues 119–139 (FNWISFAFSSASFLMKACILF) form a helical membrane-spanning segment. At 140-185 (NSSFTWFGVKAVIAEDMLYRMVRGLFCASFVKQLQTTFLATAIVLC) the chain is on the extracellular side.

The protein resides in the membrane. This is an uncharacterized protein from Saccharomyces cerevisiae (strain ATCC 204508 / S288c) (Baker's yeast).